Reading from the N-terminus, the 272-residue chain is Small ribosomal subunit protein uS2 (272 aa).

Residues 251–272 (LLTEGAPAAEAPAEAEGETKAE) are disordered. A compositionally biased stretch (low complexity) spans 253 to 264 (TEGAPAAEAPAE).

Belongs to the universal ribosomal protein uS2 family.

This Bifidobacterium adolescentis (strain ATCC 15703 / DSM 20083 / NCTC 11814 / E194a) protein is Small ribosomal subunit protein uS2.